Reading from the N-terminus, the 96-residue chain is Small ribosomal subunit protein bS6 (96 aa).

The protein belongs to the bacterial ribosomal protein bS6 family.

In terms of biological role, binds together with bS18 to 16S ribosomal RNA. This chain is Small ribosomal subunit protein bS6, found in Streptococcus mutans serotype c (strain ATCC 700610 / UA159).